The primary structure comprises 372 residues: Anhydro-N-acetylmuramic acid kinase (372 aa).

Glycine 13 to aspartate 20 provides a ligand contact to ATP.

The protein belongs to the anhydro-N-acetylmuramic acid kinase family.

The catalysed reaction is 1,6-anhydro-N-acetyl-beta-muramate + ATP + H2O = N-acetyl-D-muramate 6-phosphate + ADP + H(+). The protein operates within amino-sugar metabolism; 1,6-anhydro-N-acetylmuramate degradation. It participates in cell wall biogenesis; peptidoglycan recycling. Its function is as follows. Catalyzes the specific phosphorylation of 1,6-anhydro-N-acetylmuramic acid (anhMurNAc) with the simultaneous cleavage of the 1,6-anhydro ring, generating MurNAc-6-P. Is required for the utilization of anhMurNAc either imported from the medium or derived from its own cell wall murein, and thus plays a role in cell wall recycling. In Rhizobium johnstonii (strain DSM 114642 / LMG 32736 / 3841) (Rhizobium leguminosarum bv. viciae), this protein is Anhydro-N-acetylmuramic acid kinase.